The primary structure comprises 139 residues: Putative pre-16S rRNA nuclease (139 aa).

Belongs to the YqgF nuclease family.

The protein resides in the cytoplasm. In terms of biological role, could be a nuclease involved in processing of the 5'-end of pre-16S rRNA. This is Putative pre-16S rRNA nuclease from Pectobacterium carotovorum subsp. carotovorum (strain PC1).